The primary structure comprises 126 residues: Small ribosomal subunit protein bS6 (126 aa).

It belongs to the bacterial ribosomal protein bS6 family.

In terms of biological role, binds together with bS18 to 16S ribosomal RNA. This Bordetella bronchiseptica (strain ATCC BAA-588 / NCTC 13252 / RB50) (Alcaligenes bronchisepticus) protein is Small ribosomal subunit protein bS6.